The chain runs to 278 residues: MDVKIAKTAGFCWGVRRTVDKVMEVADQHRAPVVTLGPIIHNPQAVARFSEKGVGTVNGIGEVTDGTTVVVRTHGAVREELERAEARGLEVVDGTCPYVKYPQAMAQRLSREGYHIVIVGDANHAEIKGVISYSEQPCTVVKPGGPVPEIKAKKVAVIAQTTCIGAEFERVVGVLALRHKEVRAVNTICNDTEERQADARALASEVDAVVVVGGKNSANTRHLAEICRAIQPRTWHVETEAELGAAWFEGCRVVGLSAGASTPDWVVEGVAAWLRALR.

Position 12 (Cys-12) interacts with [4Fe-4S] cluster. Positions 41 and 74 each coordinate (2E)-4-hydroxy-3-methylbut-2-enyl diphosphate. Residues His-41 and His-74 each contribute to the dimethylallyl diphosphate site. His-41 and His-74 together coordinate isopentenyl diphosphate. Cys-96 is a [4Fe-4S] cluster binding site. (2E)-4-hydroxy-3-methylbut-2-enyl diphosphate is bound at residue His-124. His-124 is a binding site for dimethylallyl diphosphate. His-124 is an isopentenyl diphosphate binding site. The Proton donor role is filled by Glu-126. Residue Thr-161 coordinates (2E)-4-hydroxy-3-methylbut-2-enyl diphosphate. Residue Cys-189 coordinates [4Fe-4S] cluster. (2E)-4-hydroxy-3-methylbut-2-enyl diphosphate-binding residues include Ser-217, Asn-219, and Ser-261. Residues Ser-217, Asn-219, and Ser-261 each coordinate dimethylallyl diphosphate. Isopentenyl diphosphate contacts are provided by Ser-217, Asn-219, and Ser-261.

The protein belongs to the IspH family. [4Fe-4S] cluster is required as a cofactor.

It catalyses the reaction isopentenyl diphosphate + 2 oxidized [2Fe-2S]-[ferredoxin] + H2O = (2E)-4-hydroxy-3-methylbut-2-enyl diphosphate + 2 reduced [2Fe-2S]-[ferredoxin] + 2 H(+). The catalysed reaction is dimethylallyl diphosphate + 2 oxidized [2Fe-2S]-[ferredoxin] + H2O = (2E)-4-hydroxy-3-methylbut-2-enyl diphosphate + 2 reduced [2Fe-2S]-[ferredoxin] + 2 H(+). Its pathway is isoprenoid biosynthesis; dimethylallyl diphosphate biosynthesis; dimethylallyl diphosphate from (2E)-4-hydroxy-3-methylbutenyl diphosphate: step 1/1. It functions in the pathway isoprenoid biosynthesis; isopentenyl diphosphate biosynthesis via DXP pathway; isopentenyl diphosphate from 1-deoxy-D-xylulose 5-phosphate: step 6/6. Catalyzes the conversion of 1-hydroxy-2-methyl-2-(E)-butenyl 4-diphosphate (HMBPP) into a mixture of isopentenyl diphosphate (IPP) and dimethylallyl diphosphate (DMAPP). Acts in the terminal step of the DOXP/MEP pathway for isoprenoid precursor biosynthesis. The protein is 4-hydroxy-3-methylbut-2-enyl diphosphate reductase of Anaeromyxobacter sp. (strain K).